Reading from the N-terminus, the 61-residue chain is Small ribosomal subunit protein uS14 (61 aa).

Zn(2+) contacts are provided by Cys24, Cys27, Cys40, and Cys43.

This sequence belongs to the universal ribosomal protein uS14 family. Zinc-binding uS14 subfamily. In terms of assembly, part of the 30S ribosomal subunit. Contacts proteins S3 and S10. The cofactor is Zn(2+).

Its function is as follows. Binds 16S rRNA, required for the assembly of 30S particles and may also be responsible for determining the conformation of the 16S rRNA at the A site. This is Small ribosomal subunit protein uS14 from Clostridioides difficile (strain 630) (Peptoclostridium difficile).